The primary structure comprises 550 residues: Chaperonin GroEL (550 aa).

ATP contacts are provided by residues T30–P33, K51, D87–T91, G415, N478–A480, and D494.

The protein belongs to the chaperonin (HSP60) family. Forms a cylinder of 14 subunits composed of two heptameric rings stacked back-to-back. Interacts with the co-chaperonin GroES.

The protein localises to the cytoplasm. It carries out the reaction ATP + H2O + a folded polypeptide = ADP + phosphate + an unfolded polypeptide.. Together with its co-chaperonin GroES, plays an essential role in assisting protein folding. The GroEL-GroES system forms a nano-cage that allows encapsulation of the non-native substrate proteins and provides a physical environment optimized to promote and accelerate protein folding. This chain is Chaperonin GroEL, found in Desulfosudis oleivorans (strain DSM 6200 / JCM 39069 / Hxd3) (Desulfococcus oleovorans).